Consider the following 167-residue polypeptide: Endoribonuclease YbeY (167 aa).

Zn(2+)-binding residues include histidine 131, histidine 135, and histidine 141.

This sequence belongs to the endoribonuclease YbeY family. It depends on Zn(2+) as a cofactor.

The protein localises to the cytoplasm. Its function is as follows. Single strand-specific metallo-endoribonuclease involved in late-stage 70S ribosome quality control and in maturation of the 3' terminus of the 16S rRNA. This is Endoribonuclease YbeY from Rickettsia africae (strain ESF-5).